We begin with the raw amino-acid sequence, 567 residues long: Adenine deaminase (567 aa).

This sequence belongs to the metallo-dependent hydrolases superfamily. Adenine deaminase family. Requires Mn(2+) as cofactor.

The catalysed reaction is adenine + H2O + H(+) = hypoxanthine + NH4(+). The polypeptide is Adenine deaminase (Methanothrix thermoacetophila (strain DSM 6194 / JCM 14653 / NBRC 101360 / PT) (Methanosaeta thermophila)).